We begin with the raw amino-acid sequence, 335 residues long: Phosphatidate cytidylyltransferase, mitochondrial (335 aa).

It belongs to the TAM41 family. Mg(2+) serves as cofactor.

It is found in the mitochondrion inner membrane. The enzyme catalyses a 1,2-diacyl-sn-glycero-3-phosphate + CTP + H(+) = a CDP-1,2-diacyl-sn-glycerol + diphosphate. It participates in phospholipid metabolism; CDP-diacylglycerol biosynthesis; CDP-diacylglycerol from sn-glycerol 3-phosphate: step 3/3. Catalyzes the conversion of phosphatidic acid (PA) to CDP-diacylglycerol (CDP-DAG), an essential intermediate in the synthesis of phosphatidylglycerol, cardiolipin and phosphatidylinositol. The protein is Phosphatidate cytidylyltransferase, mitochondrial (TAMM41) of Bos taurus (Bovine).